A 456-amino-acid chain; its full sequence is Putative dihydroorotase (456 aa).

It belongs to the metallo-dependent hydrolases superfamily. DHOase family. Class I DHOase subfamily.

The enzyme catalyses (S)-dihydroorotate + H2O = N-carbamoyl-L-aspartate + H(+). Its pathway is pyrimidine metabolism; UMP biosynthesis via de novo pathway; (S)-dihydroorotate from bicarbonate: step 3/3. Functionally, catalyzes the reversible cyclization of carbamoyl aspartate to dihydroorotate. This is Putative dihydroorotase from Rhodopirellula baltica (strain DSM 10527 / NCIMB 13988 / SH1).